A 371-amino-acid polypeptide reads, in one-letter code: Chaperone protein DnaJ (371 aa).

The 66-residue stretch at 5-70 folds into the J domain; that stretch reads CYYEILNISK…SKRSRYDQFG (66 aa). Residues 127–204 form a CR-type zinc finger; it reads GVEKEITIPR…CYGNGKVKKQ (78 aa). Zn(2+) contacts are provided by cysteine 140, cysteine 143, cysteine 156, cysteine 159, cysteine 178, cysteine 181, cysteine 192, and cysteine 195. 4 CXXCXGXG motif repeats span residues 140–147, 156–163, 178–185, and 192–199; these read CDSCDGTG, CHACHGQG, CPVCNGTG, and CDACYGNG.

The protein belongs to the DnaJ family. In terms of assembly, homodimer. Requires Zn(2+) as cofactor.

It localises to the cytoplasm. In terms of biological role, participates actively in the response to hyperosmotic and heat shock by preventing the aggregation of stress-denatured proteins and by disaggregating proteins, also in an autonomous, DnaK-independent fashion. Unfolded proteins bind initially to DnaJ; upon interaction with the DnaJ-bound protein, DnaK hydrolyzes its bound ATP, resulting in the formation of a stable complex. GrpE releases ADP from DnaK; ATP binding to DnaK triggers the release of the substrate protein, thus completing the reaction cycle. Several rounds of ATP-dependent interactions between DnaJ, DnaK and GrpE are required for fully efficient folding. Also involved, together with DnaK and GrpE, in the DNA replication of plasmids through activation of initiation proteins. This Francisella tularensis subsp. holarctica (strain LVS) protein is Chaperone protein DnaJ.